We begin with the raw amino-acid sequence, 193 residues long: Interferon epsilon (193 aa).

The first 21 residues, 1–21 (MINKSFFEIMLVLLASSTGFS), serve as a signal peptide directing secretion. An intrachain disulfide couples Cys-53 to Cys-163. N-linked (GlcNAc...) asparagine glycosylation occurs at Asn-139.

This sequence belongs to the alpha/beta interferon family.

It is found in the secreted. Type I interferon required for maintaining basal levels of IFN-regulated genes, including 2'-5'-oligoadenylate synthetase, IRF7 and ISG15, in the female reproductive tract. Directly mediates protection against viral and bacterial genital infections. The chain is Interferon epsilon (IFNE) from Sus scrofa (Pig).